Consider the following 199-residue polypeptide: N-(5'-phosphoribosyl)anthranilate isomerase (199 aa).

It belongs to the TrpF family.

The enzyme catalyses N-(5-phospho-beta-D-ribosyl)anthranilate = 1-(2-carboxyphenylamino)-1-deoxy-D-ribulose 5-phosphate. Its pathway is amino-acid biosynthesis; L-tryptophan biosynthesis; L-tryptophan from chorismate: step 3/5. The chain is N-(5'-phosphoribosyl)anthranilate isomerase from Sulfolobus acidocaldarius (strain ATCC 33909 / DSM 639 / JCM 8929 / NBRC 15157 / NCIMB 11770).